A 183-amino-acid polypeptide reads, in one-letter code: Large ribosomal subunit protein uL6 (183 aa).

The protein belongs to the universal ribosomal protein uL6 family. Part of the 50S ribosomal subunit.

In terms of biological role, this protein binds to the 23S rRNA, and is important in its secondary structure. It is located near the subunit interface in the base of the L7/L12 stalk, and near the tRNA binding site of the peptidyltransferase center. The sequence is that of Large ribosomal subunit protein uL6 from Chlamydia trachomatis serovar A (strain ATCC VR-571B / DSM 19440 / HAR-13).